A 380-amino-acid chain; its full sequence is Histidinol-phosphate aminotransferase (380 aa).

An N6-(pyridoxal phosphate)lysine modification is found at lysine 235.

It belongs to the class-II pyridoxal-phosphate-dependent aminotransferase family. Histidinol-phosphate aminotransferase subfamily. As to quaternary structure, homodimer. It depends on pyridoxal 5'-phosphate as a cofactor.

The enzyme catalyses L-histidinol phosphate + 2-oxoglutarate = 3-(imidazol-4-yl)-2-oxopropyl phosphate + L-glutamate. It participates in amino-acid biosynthesis; L-histidine biosynthesis; L-histidine from 5-phospho-alpha-D-ribose 1-diphosphate: step 7/9. In Rhodococcus jostii (strain RHA1), this protein is Histidinol-phosphate aminotransferase.